A 505-amino-acid polypeptide reads, in one-letter code: Trans-cinnamate 4-monooxygenase (505 aa).

Residues 3-23 form a helical membrane-spanning segment; sequence LLLLEKSLIAVFVAVILATVI. (E)-cinnamate-binding positions include 213–218 and Ala-306; that span reads RSRLAQ. Cys-447 provides a ligand contact to heme.

Belongs to the cytochrome P450 family. The cofactor is heme. As to expression, expressed in roots, leaves, stems, flowers and siliques.

The protein localises to the membrane. The catalysed reaction is (E)-cinnamate + reduced [NADPH--hemoprotein reductase] + O2 = (E)-4-coumarate + oxidized [NADPH--hemoprotein reductase] + H2O + H(+). Its pathway is phenylpropanoid metabolism; trans-4-coumarate biosynthesis; trans-4-coumarate from trans-cinnamate: step 1/1. Catalyzes the first oxidative step of the phenylpropanoid pathway in higher plants by transforming trans-cinnamate into p-coumarate. The compounds formed by this pathway are essential components for lignification, pollination, and defense against ultraviolet light, predators and pathogens. The polypeptide is Trans-cinnamate 4-monooxygenase (Arabidopsis thaliana (Mouse-ear cress)).